Reading from the N-terminus, the 943-residue chain is Isoleucine--tRNA ligase (943 aa).

A 'HIGH' region motif is present at residues 59-69 (PYANGQIHLGH). Glu577 lines the L-isoleucyl-5'-AMP pocket. A 'KMSKS' region motif is present at residues 618–622 (KMSKS). Residue Lys621 coordinates ATP. Positions 906, 909, 926, and 929 each coordinate Zn(2+).

Belongs to the class-I aminoacyl-tRNA synthetase family. IleS type 1 subfamily. Monomer. It depends on Zn(2+) as a cofactor.

The protein localises to the cytoplasm. It carries out the reaction tRNA(Ile) + L-isoleucine + ATP = L-isoleucyl-tRNA(Ile) + AMP + diphosphate. Functionally, catalyzes the attachment of isoleucine to tRNA(Ile). As IleRS can inadvertently accommodate and process structurally similar amino acids such as valine, to avoid such errors it has two additional distinct tRNA(Ile)-dependent editing activities. One activity is designated as 'pretransfer' editing and involves the hydrolysis of activated Val-AMP. The other activity is designated 'posttransfer' editing and involves deacylation of mischarged Val-tRNA(Ile). The protein is Isoleucine--tRNA ligase of Xanthomonas campestris pv. campestris (strain B100).